Here is a 377-residue protein sequence, read N- to C-terminus: MISRTPLFRTSIPIQRTLATNVKPRRKRTVFTDELNKGPSFEDFVSGKAKDMMEDPLELARKDPNAKLPKWLKVPIPKGKSFHNVKKDVRELKLSTVCEEAKCPNISECWGGKKSEATATIMLLGDTCTRGCRFCSVKTNRKPAAPDPNEPENTAEAIKRWGLGYVVLTTVDRDDLVDGGARHLAETVEKIKQKAPQILVEVLGGDFRGDLDMVEILANSGLDVYAHNLETVEDLTPHIRDRRATYRQSLAVLERAKKTKPSLVTKTSLMLGFGETDEQIMKTLKDLREIGCDVVTFGQYMRPTKRHMKVVEYVTPEKFDYWRDTALDMGFLYVASGPLVRSSYKAGEAFIENVLKKRRHNVGETPRLQSVAKPSVY.

Positions 98, 103, 109, 128, 132, 135, and 343 each coordinate [4Fe-4S] cluster. In terms of domain architecture, Radical SAM core spans 113-332 (KKSEATATIM…RDTALDMGFL (220 aa)).

Belongs to the radical SAM superfamily. Lipoyl synthase family. The cofactor is [4Fe-4S] cluster.

It is found in the mitochondrion. The enzyme catalyses [[Fe-S] cluster scaffold protein carrying a second [4Fe-4S](2+) cluster] + N(6)-octanoyl-L-lysyl-[protein] + 2 oxidized [2Fe-2S]-[ferredoxin] + 2 S-adenosyl-L-methionine + 4 H(+) = [[Fe-S] cluster scaffold protein] + N(6)-[(R)-dihydrolipoyl]-L-lysyl-[protein] + 4 Fe(3+) + 2 hydrogen sulfide + 2 5'-deoxyadenosine + 2 L-methionine + 2 reduced [2Fe-2S]-[ferredoxin]. It participates in protein modification; protein lipoylation via endogenous pathway; protein N(6)-(lipoyl)lysine from octanoyl-[acyl-carrier-protein]: step 2/2. Catalyzes the radical-mediated insertion of two sulfur atoms into the C-6 and C-8 positions of the octanoyl moiety bound to the lipoyl domains of lipoate-dependent enzymes, thereby converting the octanoylated domains into lipoylated derivatives. The polypeptide is Lipoyl synthase, mitochondrial (Candida tropicalis (strain ATCC MYA-3404 / T1) (Yeast)).